The primary structure comprises 558 residues: MASSVVFAATGSLSVPPLKSRRFYVNSSLDSDVSDMSVNAPKGLFPPEPVPYKGPKLKVAIIGAGLAGMSTAVELLDQGHEVDIYDSRTFIGGKVGSFVDRRGNHIEMGLHVFFGCYNNLFRLMKKVGAEKNLLVKDHTHTFINKDGTIGELDFRFPVGAPIHGIRAFLVTNQLKPYDKLRNSLALALSPVVKALVDPDGAMRDIRNLDSISFSDWFLSKGGTRASIQRMWDPVAYALGFIDCDNMSARCMLTIFSLFATKTEASLLRMLKGSPDVYLSGPIKQYITDRGGRIHLRWGCREILYDKSADGETYVTGLAISKATNKKIVKADVYVAACDVPGIKRLLPKEWRESRFFNDIYELEGVPVVTVQLRYNGWVTELQDIELARQLKRAVGLDNLLYTPDADFSCFADLALASPADYYIEGQGTLLQCVLTPGDPYMRMPNDKIIEKVAMQVTELFPSSRGLEVTWSSVVKIAQSLYREAPGKDPFRPDQKTPIKNFFLAGSYTKQDYIDSMEGATLSGRQASSYICDAGEELAELNKKLSSSATAVPDELSLV.

The transit peptide at 1–27 (MASSVVFAATGSLSVPPLKSRRFYVNS) directs the protein to the chloroplast and chromoplast.

It belongs to the zeta carotene desaturase family. Decylplastoquinone serves as cofactor. The cofactor is 6-decylubiquinone. In terms of tissue distribution, highly expressed in leaves. Expressed at low levels in flowers and siliques.

Its subcellular location is the plastid. It is found in the chloroplast. It localises to the chromoplast. It carries out the reaction 9,9'-di-cis-zeta-carotene + 2 a quinone = 7,7',9,9'-tetra-cis-lycopene + 2 a quinol. It participates in carotenoid biosynthesis; lycopene biosynthesis. In terms of biological role, plays a crucial role in plant growth and development. Is essential for the biosynthesis of carotenoids. Carotenoids are involved in different physiological processes, including coloration, photoprotection, biosynthesis of abscisic acid (ABA) and chloroplast biogenesis. Catalyzes the conversion of zeta-carotene to lycopene via the intermediary of neurosporene. It carries out two consecutive desaturations (introduction of double bonds) at positions C-7 and C-7'. Shows stereoselectivity toward trans C15-C15'zeta-carotene double bond. The zeta-carotene produced by the phytoene desaturase PDS has a C15-C15' double bond in the cis configuration and it requires isomerization before being recognized as substrate by ZDS. The main product is 7,9,7',9'-tetra-cis-lycopene (pro-lycopene). The protein is Zeta-carotene desaturase, chloroplastic/chromoplastic of Arabidopsis thaliana (Mouse-ear cress).